The primary structure comprises 512 residues: rRNA N(6)-adenosine-methyltransferase ZCCHC4 (512 aa).

Positions 39, 41, 63, 72, 124, 127, 139, and 142 each coordinate Zn(2+). The segment at 39 to 81 (CPHGPTLLFVKVNQGKEETRKFYACSACRDRKDCNFFQWEDEK) adopts a GRF-type zinc-finger fold. S-adenosyl-L-methionine-binding positions include 171 to 174 (QYLF), Arg-201, Asp-223, 241 to 242 (NM), and Asp-274. The tract at residues 335–355 (QVDYDNHALYKHGKTGRKQSP) is regulatory loop. Residues Cys-378, Cys-381, His-391, Cys-392, Cys-395, Cys-398, His-408, Cys-409, Cys-412, Cys-415, His-422, Cys-423, Cys-426, Cys-429, His-434, and Cys-436 each coordinate Zn(2+). The DHHC domain maps to 393-445 (VHCNSCTSKDGRKWSHCFLCKKCVKPSWIHCNTCNRCALPDHSCLGPKDGCFI). The segment at 441 to 458 (DGCFICGALDHKRSNCPN) adopts a CCHC-type zinc-finger fold.

The protein belongs to the ZCCHC4 family. As to quaternary structure, interacts with components of the ASC-1 complex TRIP4, ASCC1, ASCC2 and ASCC3. Interact with AHCYL1 and AHCYL2. Interact with YTHDC2.

The protein localises to the cytoplasm. It localises to the nucleus. Its subcellular location is the nucleolus. It catalyses the reaction adenosine(4220) in 28S rRNA + S-adenosyl-L-methionine = N(6)-methyladenosine(4220) in 28S rRNA + S-adenosyl-L-homocysteine + H(+). Its function is as follows. rRNA N6-methyltransferase that specifically methylates the adenine in position 4220 of 28S rRNA. N6-methylation of adenine(4220) in 28S rRNA is required for translation. This is rRNA N(6)-adenosine-methyltransferase ZCCHC4 from Mus musculus (Mouse).